The chain runs to 84 residues: Small ribosomal subunit protein uS17c (84 aa).

The protein belongs to the universal ribosomal protein uS17 family. In terms of assembly, part of the 30S ribosomal subunit.

The protein localises to the plastid. It is found in the chloroplast. Its function is as follows. One of the primary rRNA binding proteins, it binds specifically to the 5'-end of 16S ribosomal RNA. This Phaeodactylum tricornutum (strain CCAP 1055/1) protein is Small ribosomal subunit protein uS17c (rps17).